A 109-amino-acid chain; its full sequence is Large ribosomal subunit protein uL22 (109 aa).

This sequence belongs to the universal ribosomal protein uL22 family. As to quaternary structure, part of the 50S ribosomal subunit.

Its function is as follows. This protein binds specifically to 23S rRNA; its binding is stimulated by other ribosomal proteins, e.g. L4, L17, and L20. It is important during the early stages of 50S assembly. It makes multiple contacts with different domains of the 23S rRNA in the assembled 50S subunit and ribosome. The globular domain of the protein is located near the polypeptide exit tunnel on the outside of the subunit, while an extended beta-hairpin is found that lines the wall of the exit tunnel in the center of the 70S ribosome. This chain is Large ribosomal subunit protein uL22, found in Polaromonas sp. (strain JS666 / ATCC BAA-500).